Here is a 341-residue protein sequence, read N- to C-terminus: KH domain-containing RNA-binding protein qki.S (341 aa).

One can recognise a KH domain in the interval 88 to 154 (YVPVKEYPDF…WEHLNEDLHV (67 aa)). The Nuclear localization signal signature appears at 324 to 330 (RVHPYQR).

This sequence belongs to the quaking family. As to quaternary structure, homodimer; does not require RNA to homodimerize.

It localises to the nucleus. It is found in the cytoplasm. In terms of biological role, RNA reader protein, which recognizes and binds specific RNAs, thereby regulating RNA metabolic processes, such as pre-mRNA splicing, circular RNA (circRNA) formation, mRNA export, mRNA stability and/or translation. Involved in various cellular processes, such as mRNA storage into stress granules, apoptosis, interferon response, glial cell fate and development. Binds to the 5'-NACUAAY-N(1,20)-UAAY-3' RNA core sequence. Acts as a mRNA modification reader that specifically recognizes and binds mRNA transcripts modified by internal N(7)-methylguanine (m7G). Promotes the formation of circular RNAs (circRNAs): acts by binding to sites flanking circRNA-forming exons. CircRNAs are produced by back-splicing circularization of pre-mRNAs. Required to protect and promote stability of mRNAs which promotes oligodendrocyte differentiation. Acts as an important regulator of muscle development. Essential for notochord development. The polypeptide is KH domain-containing RNA-binding protein qki.S (Xenopus laevis (African clawed frog)).